Here is a 1044-residue protein sequence, read N- to C-terminus: MAKVRVYELAKEFGVESKVVLATLKEMGEFVRSASSTVEPPVIRRLKDKFPTEGGAASRPAPAVKPGPRLPQGARPGPAPAARPQAPAPAQPAPPQPAPAAASTPAPAPAPAPRPAEPAANPAPAAPPAFQAPAPAPAERPAAAQRPAAPAPQRPAPAGRPSTPPVSGGPGQGPRPGARPGGPGAPGARPGAPGAGGPGARRPGPGDRPERSERPDRGDRPQGDRPRSDRPQGERQQGDRPQGDRPGRPGAPGGAPRPGAGAPRPGNNPFAPSQGMPRSQGDRPGGAPRPGNNPFASNQGMPRPQGGPRPTPAGPGGPRPGGPRPNPGMMPARPTVGRPGAGPGAGRPGAPGRGGPGGARGGAGGGFAGRPGGPSAGGGGGGFAGRPGGGGGGPRGNRGGTQGAFGRAGGRPVRGRKSKRAKRQEYEAMQAPAVGGVSVRHGDGTTVLRIRRGASLSDFAERIDADPAALVTILFHLGEMATATQSLDEDTFQLLGGELGYVIEVVSPEDEERELLAGFSIDLDAELEAEGDDDLSARPPVVTVMGHVDHGKTKLLDAIRSSDVVAKEAGGITQHIGAYQVVKEHEGIERPITFIDTPGHEAFTAMRARGAKVTDIAILVVAADDGVMPQTIEALNHAQAADVPIVVAVNKVDKEGANPDKVRQQLTEYNLVAEEYGGDTMFVDVSARQGTGLDSLLEAVLLTADASLDLRANSDKDARGIAIEGNLDKGRGPVATVLVQSGTLHVGDAIVAGTGYGRVRAMLDENGDAVQEATPSRPVQVLGLTSVPGAGDTFLVAPDDRTARQIAEKREAQERNAALAKARKRITLEDFTKALQQGKVETLNLILKGDGAGSVEALEDALFKIDVGDEVELRVIDRGVGAVTKNNVNLAVASNAIIIGFNVRPEQQTKEYADREGVDIRFYSVIYAAIEDVEASLKGLLKPEFEEVQLGTAEVREIFRSSKFGNIAGTLVRSGLIRRNSKARVLRRGVVHGDNLTIESLRRFKDDATEVREGYECGIGLGSYNDLQVDDVIETYEMQEKPRG.

The tract at residues 31–425 (VRSASSTVEP…RKSKRAKRQE (395 aa)) is disordered. Pro residues-rich tracts occupy residues 77–98 (GPAPAARPQAPAPAQPAPPQPA) and 106–116 (APAPAPAPRPA). Residues 117-148 (EPAANPAPAAPPAFQAPAPAPAERPAAAQRPA) show a composition bias toward low complexity. Over residues 168-185 (GGPGQGPRPGARPGGPGA) the composition is skewed to gly residues. Positions 204-247 (GPGDRPERSERPDRGDRPQGDRPRSDRPQGERQQGDRPQGDRPG) are enriched in basic and acidic residues. Over residues 285 to 304 (GGAPRPGNNPFASNQGMPRP) the composition is skewed to low complexity. A compositionally biased stretch (pro residues) spans 305-328 (QGGPRPTPAGPGGPRPGGPRPNPG). A compositionally biased stretch (low complexity) spans 329–338 (MMPARPTVGR). A compositionally biased stretch (gly residues) spans 339–409 (PGAGPGAGRP…GTQGAFGRAG (71 aa)). The segment covering 413–422 (VRGRKSKRAK) has biased composition (basic residues). Positions 537–709 (ARPPVVTVMG…VLLTADASLD (173 aa)) constitute a tr-type G domain. Residues 546–553 (GHVDHGKT) form a G1 region. Residue 546 to 553 (GHVDHGKT) coordinates GTP. The segment at 571–575 (GITQH) is G2. Positions 596-599 (DTPG) are G3. GTP-binding positions include 596–600 (DTPGH) and 650–653 (NKVD). Residues 650–653 (NKVD) form a G4 region. The interval 686–688 (SAR) is G5.

Belongs to the TRAFAC class translation factor GTPase superfamily. Classic translation factor GTPase family. IF-2 subfamily.

It is found in the cytoplasm. Its function is as follows. One of the essential components for the initiation of protein synthesis. Protects formylmethionyl-tRNA from spontaneous hydrolysis and promotes its binding to the 30S ribosomal subunits. Also involved in the hydrolysis of GTP during the formation of the 70S ribosomal complex. The sequence is that of Translation initiation factor IF-2 from Kineococcus radiotolerans (strain ATCC BAA-149 / DSM 14245 / SRS30216).